The following is a 160-amino-acid chain: Ribosomal RNA large subunit methyltransferase H (160 aa).

S-adenosyl-L-methionine contacts are provided by residues Leu76, Gly108, and 127–132 (LGKMTW).

Belongs to the RNA methyltransferase RlmH family. Homodimer.

The protein localises to the cytoplasm. It carries out the reaction pseudouridine(1915) in 23S rRNA + S-adenosyl-L-methionine = N(3)-methylpseudouridine(1915) in 23S rRNA + S-adenosyl-L-homocysteine + H(+). In terms of biological role, specifically methylates the pseudouridine at position 1915 (m3Psi1915) in 23S rRNA. The sequence is that of Ribosomal RNA large subunit methyltransferase H from Rhizobium etli (strain ATCC 51251 / DSM 11541 / JCM 21823 / NBRC 15573 / CFN 42).